We begin with the raw amino-acid sequence, 389 residues long: Apoptosis inhibitor U19 (389 aa).

The protein belongs to the beta-herpesvirinae UL38 protein family. As to quaternary structure, interacts with host MDM2; this interaction leads to the stabilization of host TP53.

It is found in the host cytoplasm. Its subcellular location is the host nucleus. In terms of biological role, plays a role in the inhibition of host apoptosis to facilitate efficient viral replication. Promotes stabilization and inactivation of host TP53 through interaction with host MDM2. This is Apoptosis inhibitor U19 (U19) from Human herpesvirus 6A (strain Uganda-1102) (HHV-6 variant A).